Consider the following 247-residue polypeptide: Coproheme decarboxylase (247 aa).

Residues Arg-129, 143 to 147, His-170, Gln-183, and Ser-221 each bind Fe-coproporphyrin III; that span reads YPMDK. The active site involves Tyr-143.

Belongs to the ChdC family. Type 1 subfamily. Fe-coproporphyrin III is required as a cofactor.

It carries out the reaction Fe-coproporphyrin III + 2 H2O2 + 2 H(+) = heme b + 2 CO2 + 4 H2O. The catalysed reaction is Fe-coproporphyrin III + H2O2 + H(+) = harderoheme III + CO2 + 2 H2O. The enzyme catalyses harderoheme III + H2O2 + H(+) = heme b + CO2 + 2 H2O. It functions in the pathway porphyrin-containing compound metabolism; protoheme biosynthesis. In terms of biological role, involved in coproporphyrin-dependent heme b biosynthesis. Catalyzes the decarboxylation of Fe-coproporphyrin III (coproheme) to heme b (protoheme IX), the last step of the pathway. The reaction occurs in a stepwise manner with a three-propionate intermediate. The chain is Coproheme decarboxylase from Bacillus cereus (strain AH820).